Here is a 412-residue protein sequence, read N- to C-terminus: Inositol polyphosphate-5-phosphatase A (412 aa).

The S-farnesyl cysteine moiety is linked to residue Cys409. Positions 410–412 (VVQ) are cleaved as a propeptide — removed in mature form.

The protein belongs to the inositol 1,4,5-trisphosphate 5-phosphatase type I family. As to quaternary structure, interacts with TASOR. Isoprenylation at Cys-409 is required for localization at the membrane.

It localises to the cell membrane. Its subcellular location is the cell projection. The protein localises to the dendrite. The catalysed reaction is 1D-myo-inositol 1,4,5-trisphosphate + H2O = 1D-myo-inositol 1,4-bisphosphate + phosphate. It carries out the reaction 1D-myo-inositol 1,3,4,5-tetrakisphosphate + H2O = 1D-myo-inositol 1,3,4-trisphosphate + phosphate. Inhibited by EDTA and 2,3-bisphosphoglycerate. Functionally, phosphatase that specifically hydrolyzes the 5-phosphate of inositol 1,4,5-trisphosphate to inositol 1,4-bisphosphate, and inositol 1,3,4,5-tetrasphosphate to inositol 1,3,4-trisphosphate. Plays a crucial role in the survival of cerebellar Purkinje cells. The chain is Inositol polyphosphate-5-phosphatase A (INPP5A) from Canis lupus familiaris (Dog).